A 500-amino-acid polypeptide reads, in one-letter code: FAD-linked oxidoreductase easE (500 aa).

Positions 37-220 (QGRIPLFTVG…TRATMRVFPD (184 aa)) constitute an FAD-binding PCMH-type domain.

This sequence belongs to the oxygen-dependent FAD-linked oxidoreductase family. It depends on FAD as a cofactor.

Its pathway is alkaloid biosynthesis; ergot alkaloid biosynthesis. Its function is as follows. FAD-linked oxidoreductase; part of the gene cluster that mediates the biosynthesis of fungal ergot alkaloid. DmaW catalyzes the first step of ergot alkaloid biosynthesis by condensing dimethylallyl diphosphate (DMAP) and tryptophan to form 4-dimethylallyl-L-tryptophan. The second step is catalyzed by the methyltransferase easF that methylates 4-dimethylallyl-L-tryptophan in the presence of S-adenosyl-L-methionine, resulting in the formation of 4-dimethylallyl-L-abrine. The catalase easC and the FAD-dependent oxidoreductase easE then transform 4-dimethylallyl-L-abrine to chanoclavine-I which is further oxidized by easD in the presence of NAD(+), resulting in the formation of chanoclavine-I aldehyde. Chanoclavine-I aldehyde is the precursor of ergoamides and ergopeptines in Clavicipitaceae, and clavine-type alcaloids such as fumiclavine in Trichocomaceae. However, the metabolites downstream of chanoclavine-I aldehyde in Arthrodermataceae have not been identified yet. The chain is FAD-linked oxidoreductase easE from Arthroderma benhamiae (strain ATCC MYA-4681 / CBS 112371) (Trichophyton mentagrophytes).